A 549-amino-acid chain; its full sequence is Zinc finger protein 18 (549 aa).

The 83-residue stretch at 41–123 (RQLFRQFRYQ…TLVESLKGDP (83 aa)) folds into the SCAN box domain. The KRAB domain maps to 211 to 283 (DLGASLLPAA…YLHVNEKIPR (73 aa)). 5 consecutive C2H2-type zinc fingers follow at residues 408–430 (PTCR…QRTH), 436–458 (FQCT…QRTH), 464–486 (CKCD…EKIH), 492–514 (YKCP…QRVH), and 520–542 (YKCS…QRSH).

The protein belongs to the krueppel C2H2-type zinc-finger protein family.

The protein localises to the nucleus. May be involved in transcriptional regulation. The polypeptide is Zinc finger protein 18 (ZNF18) (Homo sapiens (Human)).